Reading from the N-terminus, the 208-residue chain is High frequency lysogenization protein HflD homolog (208 aa).

The protein belongs to the HflD family.

The protein resides in the cytoplasm. It is found in the cell inner membrane. The polypeptide is High frequency lysogenization protein HflD homolog (Yersinia enterocolitica serotype O:8 / biotype 1B (strain NCTC 13174 / 8081)).